We begin with the raw amino-acid sequence, 287 residues long: tRNA selenocysteine 1-associated protein 1 (287 aa).

RRM domains follow at residues 3–86 (ASLW…YATY) and 96–175 (YSLF…VAIP).

Belongs to the RRM TRSPAP family. In terms of assembly, component of the tRNA(Sec) complex composed at least of EEFSEC, SECISBP2, SEPHS1, SEPSECS, TRNAU1AP and tRNA(Sec). Associates with mRNP and/or polysomes. Found in a complex with tRNA(Sec). Interacts with SEPSECS. Ubiquitous.

Its subcellular location is the nucleus. It is found in the cytoplasm. Functionally, involved in the early steps of selenocysteine biosynthesis and tRNA(Sec) charging to the later steps resulting in the cotranslational incorporation of selenocysteine into selenoproteins. Stabilizes the SECISBP2, EEFSEC and tRNA(Sec) complex. May be involved in the methylation of tRNA(Sec). Enhances efficiency of selenoproteins synthesis. The chain is tRNA selenocysteine 1-associated protein 1 (Trnau1ap) from Rattus norvegicus (Rat).